The chain runs to 329 residues: Ig gamma-2C chain C region (329 aa).

Positions 1–97 (ARTTAPSVYP…ATKSNLIKRI (97 aa)) are CH1. Residues Cys27 and Cys82 are joined by a disulfide bond. A hinge region spans residues 98-113 (EPRRPKPRPPTDICSC). Residues 114 to 222 (DDNLGRPSVF…PIEKTISKPR (109 aa)) form a CH2 region. Cystine bridges form between Cys143/Cys203 and Cys249/Cys307. Positions 223 to 329 (GKARTPQVYT…QKNLSRSPGK (107 aa)) are CH3.

The chain is Ig gamma-2C chain C region from Rattus norvegicus (Rat).